Here is a 217-residue protein sequence, read N- to C-terminus: Phosphoribosylformylglycinamidine synthase subunit PurQ (217 aa).

The Glutamine amidotransferase type-1 domain occupies 2–217; sequence SIGVLVFPGS…GRVLLQGLLS (216 aa). The Nucleophile role is filled by Cys86. Catalysis depends on residues His194 and Glu196.

As to quaternary structure, part of the FGAM synthase complex composed of 1 PurL, 1 PurQ and 2 PurS subunits.

The protein localises to the cytoplasm. The enzyme catalyses N(2)-formyl-N(1)-(5-phospho-beta-D-ribosyl)glycinamide + L-glutamine + ATP + H2O = 2-formamido-N(1)-(5-O-phospho-beta-D-ribosyl)acetamidine + L-glutamate + ADP + phosphate + H(+). It catalyses the reaction L-glutamine + H2O = L-glutamate + NH4(+). Its pathway is purine metabolism; IMP biosynthesis via de novo pathway; 5-amino-1-(5-phospho-D-ribosyl)imidazole from N(2)-formyl-N(1)-(5-phospho-D-ribosyl)glycinamide: step 1/2. Part of the phosphoribosylformylglycinamidine synthase complex involved in the purines biosynthetic pathway. Catalyzes the ATP-dependent conversion of formylglycinamide ribonucleotide (FGAR) and glutamine to yield formylglycinamidine ribonucleotide (FGAM) and glutamate. The FGAM synthase complex is composed of three subunits. PurQ produces an ammonia molecule by converting glutamine to glutamate. PurL transfers the ammonia molecule to FGAR to form FGAM in an ATP-dependent manner. PurS interacts with PurQ and PurL and is thought to assist in the transfer of the ammonia molecule from PurQ to PurL. This Parasynechococcus marenigrum (strain WH8102) protein is Phosphoribosylformylglycinamidine synthase subunit PurQ.